A 467-amino-acid chain; its full sequence is MERAAERLARQRARGLWRSRFACCVAAEPSGSRLGQSVRGAAAAPARCAAEGSADLYLAVNNEGPEVAPPARTGPPDADGIEGGAAVAGNEQGGVAAGNERRAATGDEKESASGGENESESESESESESESGADDGDWDDDDDAGPAGGVTREEAEGAARALNFRIIRRLTPGSEGRVFEATGPAPAQEHVVLKIGASASTLAEAMLLRTLDHANVVKLKAVLFHGELVCAVLARYREDLHTHLWKIDRPMALPTALQVTRAVLQGLAYLHSRRIAHRDVKTENVFLNGPGDVCLGDFGAAHGPVTEPRYYGLAGTLETNSPELLARARYDCRTDVWSAGVVAYEMLAYPRALFDSPAGPQGEDAEASGPPTILGDRDCARQLLRVIRRLAVHAEEFPPSPTDRLTRNFKRHAATGREPHSPYRCLAVLRLPCDADRLLHQMLTFDFRARPTAAELLEHPVFGAASG.

A disordered region spans residues Gly-64 to Ala-155. Residues Asn-99 to Ser-111 are compositionally biased toward basic and acidic residues. Residues Asn-117 to Ala-144 are compositionally biased toward acidic residues. The region spanning Phe-164–Phe-462 is the Protein kinase domain. ATP-binding positions include Leu-170–Val-178 and Lys-194. Asp-279 (proton acceptor) is an active-site residue.

The protein belongs to the protein kinase superfamily. Ser/Thr protein kinase family. Phosphorylated by UL13 homolog; this phosphorylation regulates subsequent phosphorylation of UL31 and UL34 homologs by US3. Autophosphorylated.

The protein localises to the host cytoplasm. Its subcellular location is the host nucleus. The catalysed reaction is L-seryl-[protein] + ATP = O-phospho-L-seryl-[protein] + ADP + H(+). It catalyses the reaction L-threonyl-[protein] + ATP = O-phospho-L-threonyl-[protein] + ADP + H(+). Functionally, multifunctional serine/threonine kinase that plays a role in several processes including egress of virus particles from the nucleus, modulation of the actin cytoskeleton and inhibition of apoptosis. Phosphorylates UL31 and UL34 homologs, two critical regulators of capsid budding from nucleus to endoplasmic reticulum, thereby facilitating virion egress. Modulates and redistributes host components of the nuclear envelope, including LMNA, emerin/EMD and the nuclear matrix protein MATR3. Phosphorylates envelope glycoprotein B (gB), probably to direct it to the cell surface. Promotes virus intracellular spread by restructuring host cell cytoskeleton. Blocks host apoptosis to extend cell survival and allow efficient viral replication. Promotes viral gene expression by phosphorylating host HDAC2 to reduce viral genome silencing. The polypeptide is Serine/threonine-protein kinase US3 homolog (Bos taurus (Bovine)).